A 573-amino-acid chain; its full sequence is MSPARLPISRESCLTIPAGFSPSALLDSPVLLTNFKVEPSPTTGSLGMAAILHKSAHPDMLPSPRDKSVRNAHEDRGSRDFEFKPHLNSSSQSLAPAMSDLKKHEHSMQNQSMNPSSSSSNMVNENRPPCSRESSLTVNVSAQNQPVGMVGLTDSMPAEVGTSEPQQMNSSDNAMQEPQSENVADKSADDGYNWRKYGQKHVKGSENPRSYYKCTHPNCEVKKLLERAVDGLITEVVYKGRHNHPKPQPNRRLAGGAVPSNQGEERYDGASAADDKSSNALSNLANPVHSPGMVEPVPASVSDDDIDAGGGRPYPGDDATEEEDLESKRRKMESAGIDAALMGKPNREPRVVVQTVSEVDILDDGYRWRKYGQKVVKGNPNPRSYYKCTSTGCPVRKHVERASHDPKSVITTYEGKHNHEVPAARNATHEMSAPPMKNVVHQINSNMPSSIGGMMRACEARNYTNQYSQAAETDTVSLDLGVGISPNHSDATNQMQSSGPDQMQYQMQTMGSMYGNMRHPSSMAAPAVQGNSAARMYGSREEKGNEGFTFRATPMDHSANLCYSSAGNLVMGP.

Disordered regions lie at residues 56–133 and 157–192; these read AHPD…CSRE and PAEV…DDGY. A compositionally biased stretch (basic and acidic residues) spans 64 to 85; sequence PRDKSVRNAHEDRGSRDFEFKP. A compositionally biased stretch (low complexity) spans 108 to 122; sequence MQNQSMNPSSSSSNM. The segment covering 163-182 has biased composition (polar residues); the sequence is SEPQQMNSSDNAMQEPQSEN. Residues 183–192 are compositionally biased toward basic and acidic residues; sequence VADKSADDGY. A DNA-binding region (WRKY 1) is located at residues 183-247; sequence VADKSADDGY…YKGRHNHPKP (65 aa). Zn(2+) is bound by residues Cys214, Cys219, His242, and His244. Positions 240 to 332 are disordered; it reads GRHNHPKPQP…EDLESKRRKM (93 aa). Positions 263–277 are enriched in basic and acidic residues; it reads GEERYDGASAADDKS. Residues 357–422 constitute a DNA-binding region (WRKY 2); it reads SEVDILDDGY…YEGKHNHEVP (66 aa). Zn(2+) is bound by residues Cys388, Cys393, His417, and His419.

The protein belongs to the WRKY group I family. In terms of tissue distribution, expressed in endosperm, but not in leaves.

Its subcellular location is the nucleus. In terms of biological role, transcription factor involved in starch synthesis. Acts as a transcriptional activator in sugar signaling. Interacts specifically with the SURE and W-box elements, but not with the SP8a element. The sequence is that of WRKY transcription factor SUSIBA2 from Hordeum vulgare (Barley).